The following is a 203-amino-acid chain: Reticulon-like protein B12 (203 aa).

A Reticulon domain is found at 24–203 (VADVMLWRKK…WANPENKKLS (180 aa)). The next 3 membrane-spanning stretches (helical) occupy residues 34 to 54 (NVSV…EAFA), 55 to 75 (YTIF…LFLW), and 132 to 152 (VAVS…QTLC).

It localises to the endoplasmic reticulum membrane. This is Reticulon-like protein B12 (RTNLB12) from Arabidopsis thaliana (Mouse-ear cress).